Reading from the N-terminus, the 634-residue chain is DNA gyrase subunit B (634 aa).

The Toprim domain occupies 416–530 (REIYIVEGDS…NGHVYIAMPP (115 aa)). E422, D495, and D497 together coordinate Mg(2+).

This sequence belongs to the type II topoisomerase GyrB family. In terms of assembly, heterotetramer, composed of two GyrA and two GyrB chains. In the heterotetramer, GyrA contains the active site tyrosine that forms a transient covalent intermediate with DNA, while GyrB binds cofactors and catalyzes ATP hydrolysis. The cofactor is Mg(2+). Mn(2+) serves as cofactor. It depends on Ca(2+) as a cofactor.

It localises to the cytoplasm. It carries out the reaction ATP-dependent breakage, passage and rejoining of double-stranded DNA.. A type II topoisomerase that negatively supercoils closed circular double-stranded (ds) DNA in an ATP-dependent manner to modulate DNA topology and maintain chromosomes in an underwound state. Negative supercoiling favors strand separation, and DNA replication, transcription, recombination and repair, all of which involve strand separation. Also able to catalyze the interconversion of other topological isomers of dsDNA rings, including catenanes and knotted rings. Type II topoisomerases break and join 2 DNA strands simultaneously in an ATP-dependent manner. The polypeptide is DNA gyrase subunit B (Borrelia hermsii).